The chain runs to 339 residues: MPSMIVVGGQWGDEGKGSIIAYLALHDEPEIIARGGVGTNAGHSVFINGKKYAVRQLPTGFMQRKARLLVGAGVLVDPEVFFHELEHLKDFNVKERVGIDYRCAIIEPKHKELDRSNGYLHGKIGTTGSGCGPANADRVMRKAKQAKDIKELEPYLTDVAAEVNDALDEGALVLVEGTQGFGLSLYYGTYPYVTSKDVTASSVAADVGIGPTRVDEVIVVFKSFPTRVGAGPFPTEMPMEEADRLGLVEYGTVTGRRRRVGWFDFEMARYSARVNGATMLAVTMLDKYDKEAFGVTDYDKLPRKAKEFIEEIEEKVGVPVGLIKTGPELEHIIDRRDTI.

Residues 12 to 18 (GDEGKGS) and 42 to 44 (GHS) contribute to the GTP site. Aspartate 13 functions as the Proton acceptor in the catalytic mechanism. Aspartate 13 and glycine 42 together coordinate Mg(2+). IMP is bound by residues 13–16 (DEGK), 40–43 (NAGH), threonine 127, arginine 141, glutamine 179, threonine 194, and arginine 256. The active-site Proton donor is the histidine 43. A substrate-binding site is contributed by 252 to 258 (TVTGRRR). Residues arginine 258, 284–286 (MLD), and 324–326 (KTG) each bind GTP.

It belongs to the adenylosuccinate synthetase family. In terms of assembly, homodimer. Mg(2+) serves as cofactor.

Its subcellular location is the cytoplasm. The enzyme catalyses IMP + L-aspartate + GTP = N(6)-(1,2-dicarboxyethyl)-AMP + GDP + phosphate + 2 H(+). The protein operates within purine metabolism; AMP biosynthesis via de novo pathway; AMP from IMP: step 1/2. Plays an important role in the de novo pathway of purine nucleotide biosynthesis. Catalyzes the first committed step in the biosynthesis of AMP from IMP. In Pyrococcus sp. (strain ST700), this protein is Adenylosuccinate synthetase.